The following is a 117-amino-acid chain: Large-conductance mechanosensitive channel (117 aa).

The next 3 membrane-spanning stretches (helical) occupy residues 7–27 (EFAL…GAAF), 30–50 (IVTA…FGTV), and 64–84 (GMFV…FIFV).

It belongs to the MscL family. Homopentamer.

The protein resides in the cell membrane. Channel that opens in response to stretch forces in the membrane lipid bilayer. May participate in the regulation of osmotic pressure changes within the cell. This is Large-conductance mechanosensitive channel from Staphylococcus saprophyticus subsp. saprophyticus (strain ATCC 15305 / DSM 20229 / NCIMB 8711 / NCTC 7292 / S-41).